The primary structure comprises 214 residues: Dephospho-CoA kinase (214 aa).

The region spanning 20 to 214 (RIGITGGIAS…KLQLKKLYKF (195 aa)) is the DPCK domain. 28-33 (ASGKTI) lines the ATP pocket.

This sequence belongs to the CoaE family.

Its subcellular location is the cytoplasm. It catalyses the reaction 3'-dephospho-CoA + ATP = ADP + CoA + H(+). It functions in the pathway cofactor biosynthesis; coenzyme A biosynthesis; CoA from (R)-pantothenate: step 5/5. In terms of biological role, catalyzes the phosphorylation of the 3'-hydroxyl group of dephosphocoenzyme A to form coenzyme A. This chain is Dephospho-CoA kinase, found in Prochlorococcus marinus (strain NATL2A).